The sequence spans 146 residues: Hemoglobin subunit beta (146 aa).

At Thr-1 the chain carries Blocked amino end (Thr). The 145-residue stretch at 2–146 (HWTAEERHYI…VAHALTLQYH (145 aa)) folds into the Globin domain. The heme b site is built by His-63 and His-92.

It belongs to the globin family. Heterotetramer of two alpha chains and two beta chains. As to expression, red blood cells.

Functionally, involved in oxygen transport from the lung to the various peripheral tissues. This is Hemoglobin subunit beta (HBB) from Caretta caretta (Loggerhead sea turtle).